Consider the following 187-residue polypeptide: CASP-like protein SELMODRAFT_416718 (187 aa).

A helical membrane pass occupies residues 1 to 21 (MMFGGVGMATLPLSLIFAFKN). Over 22-100 (RPKCVITRAQ…EAFPQGEKAD (79 aa)) the chain is Extracellular. A helical membrane pass occupies residues 101 to 119 (TSWALTVLFYLAKLVFGIL). Residues 120–125 (GLALSV) lie on the Cytoplasmic side of the membrane. A helical membrane pass occupies residues 126–145 (IWLLHIIVFMLVNPPAFPFL). Residues 146 to 155 (NQVFIQLDSA) lie on the Extracellular side of the membrane. Residues 156–176 (WGLLGTTAFAIFCYYLVMSVI) form a helical membrane-spanning segment. Residues 177-187 (SGEMHSIYPMK) lie on the Cytoplasmic side of the membrane.

Belongs to the Casparian strip membrane proteins (CASP) family. As to quaternary structure, homodimer and heterodimers.

It localises to the cell membrane. The protein is CASP-like protein SELMODRAFT_416718 of Selaginella moellendorffii (Spikemoss).